The chain runs to 340 residues: Ribonucleoside-diphosphate reductase small subunit (340 aa).

Fe cation contacts are provided by D94, E124, and H127. Y131 is an active-site residue. A helical membrane pass occupies residues 180 to 200 (FILMILIEGIFFAASFAAIAY). Positions 187, 221, and 224 each coordinate Fe cation.

This sequence belongs to the ribonucleoside diphosphate reductase small chain family. Heterotetramer composed of a homodimer of the large subunit (R1) and a homodimer of the small subunit (R2). Larger multisubunit protein complex are also active, composed of (R1)n(R2)n. Fe cation serves as cofactor.

Its subcellular location is the host membrane. The enzyme catalyses a 2'-deoxyribonucleoside 5'-diphosphate + [thioredoxin]-disulfide + H2O = a ribonucleoside 5'-diphosphate + [thioredoxin]-dithiol. Its function is as follows. Ribonucleoside-diphosphate reductase holoenzyme provides the precursors necessary for viral DNA synthesis. Allows virus growth in non-dividing cells, as well as reactivation from latency in infected hosts. Catalyzes the biosynthesis of deoxyribonucleotides from the corresponding ribonucleotides. This Human herpesvirus 1 (strain KOS) (HHV-1) protein is Ribonucleoside-diphosphate reductase small subunit.